The sequence spans 331 residues: Nucleoporin Nup35 (331 aa).

2 disordered regions span residues Met1–Asn63 and Ala79–Asp110. Composition is skewed to polar residues over residues Ser8 to Tyr20, His35 to Gly56, and Gly84 to Pro104. Residues Arg187–Asp268 form the RRM Nup35-type domain.

It belongs to the Nup35 family. As to quaternary structure, interacts with Nup154.

The protein localises to the nucleus. It is found in the nuclear pore complex. Its function is as follows. Functions as a component of the nuclear pore complex (NPC). May have a role in the organization of the inner nuclear membrane proteins at the nuclear envelope together with Nup154. In Drosophila melanogaster (Fruit fly), this protein is Nucleoporin Nup35.